The primary structure comprises 136 residues: Keratin-associated protein 9-3 (136 aa).

11 consecutive repeat copies span residues C3–S7, C21–T25, C31–S35, C36–S40, C41–S45, C46–G50, C87–S91, C97–H101, C107–S111, C117–A121, and C126–S130. The segment at C21–S130 is 11 X 5 AA repeats of C-C-[AEQVR]-[ALPTV]-[AGHST].

Belongs to the KRTAP type 9 family. As to quaternary structure, interacts with hair keratins.

Functionally, in the hair cortex, hair keratin intermediate filaments are embedded in an interfilamentous matrix, consisting of hair keratin-associated proteins (KRTAP), which are essential for the formation of a rigid and resistant hair shaft through their extensive disulfide bond cross-linking with abundant cysteine residues of hair keratins. The matrix proteins include the high-sulfur and high-glycine-tyrosine keratins. This chain is Keratin-associated protein 9-3, found in Mus musculus (Mouse).